The chain runs to 228 residues: Prolactin-2A1 (228 aa).

The first 28 residues, 1 to 28, serve as a signal peptide directing secretion; sequence MQLSVTHPCCRTLILLLVSNLLLWESEA. Cystine bridges form between Cys-87–Cys-203 and Cys-220–Cys-228.

Belongs to the somatotropin/prolactin family. As to expression, expressed specifically in the placenta. Expression restricted to the junctional zone of the chorioallantoic placenta.

Its subcellular location is the secreted. The protein is Prolactin-2A1 (Prl2a1) of Mus musculus (Mouse).